We begin with the raw amino-acid sequence, 149 residues long: Urease accessory protein UreE (149 aa).

It belongs to the UreE family.

It is found in the cytoplasm. In terms of biological role, involved in urease metallocenter assembly. Binds nickel. Probably functions as a nickel donor during metallocenter assembly. The polypeptide is Urease accessory protein UreE (Corynebacterium efficiens (strain DSM 44549 / YS-314 / AJ 12310 / JCM 11189 / NBRC 100395)).